The sequence spans 170 residues: Cathelicidin antimicrobial peptide (170 aa).

A signal peptide spans 1 to 30; the sequence is MKTQRDSPSLGRWSLVLLLLGLVMPLAIVA. Positions 31-131 are cleaved as a propeptide — cathelin-like domain (CLD); the sequence is QVLSYQEAVL…DISCDKDNRR (101 aa). Cystine bridges form between cysteine 86–cysteine 97 and cysteine 108–cysteine 125. An active core region spans residues 150–162; the sequence is FKRIVQRIKDFLQ.

Belongs to the cathelicidin family. In terms of assembly, monomer, homodimer or homotrimer (in vitro). Oligomerizes as tetra- or hexamer in solution (in vitro). Post-translationally, proteolytically cleaved by proteinase PRTN3 into antibacterial peptide LL-37. Proteolytically cleaved by cathepsin CTSG and neutrophil elastase ELANE. Resistant to proteolytic degradation in solution, and when bound to both zwitterionic (mimicking mammalian membranes) and negatively charged membranes (mimicking bacterial membranes). In terms of processing, after secretion onto the skin surface, the CAMP gene product is processed by a serine protease-dependent mechanism into multiple novel antimicrobial peptides distinct from and shorter than cathelicidin LL-37. These peptides show enhanced antimicrobial action, acquiring the ability to kill skin pathogens such as S.aureus, E.coli and C.albicans. These peptides have lost the ability to stimulate CXCL8/IL8 release from keratinocytes. The peptides act synergistically, killing bacteria at lower concentrations when present together, and maintain activity at increased salt condition.

Its subcellular location is the secreted. The protein resides in the vesicle. Antimicrobial protein that is an integral component of the innate immune system. Binds to bacterial lipopolysaccharides (LPS). Acts via neutrophil N-formyl peptide receptors to enhance the release of CXCL2. Postsecretory processing generates multiple cathelicidin antimicrobial peptides with various lengths which act as a topical antimicrobial defense in sweat on skin. The unprocessed precursor form, cathelicidin antimicrobial peptide, inhibits the growth of Gram-negative E.coli and E.aerogenes with efficiencies comparable to that of the mature peptide LL-37 (in vitro). In terms of biological role, antimicrobial peptide that is an integral component of the innate immune system. Binds to bacterial lipopolysaccharides (LPS). Causes membrane permeabilization by forming transmembrane pores (in vitro). Causes lysis of E.coli. Exhibits antimicrobial activity against Gram-negative bacteria such as P.aeruginosa, S.typhimurium, E.aerogenes, E.coli and P.syringae, Gram-positive bacteria such as L.monocytogenes, S.epidermidis, S.pyogenes and S.aureus, as well as vancomycin-resistant enterococci (in vitro). Exhibits antimicrobial activity against methicillin-resistant S.aureus, P.mirabilis, and C.albicans in low-salt media, but not in media containing 100 mM NaCl (in vitro). Forms chiral supramolecular assemblies with quinolone signal (PQS) molecules of P.aeruginosa, which may lead to interference of bacterial quorum signaling and perturbance of bacterial biofilm formation. May form supramolecular fiber-like assemblies on bacterial membranes. Induces cytokine and chemokine producation as well as TNF/TNFA and CSF2/GMCSF production in normal human keratinocytes. Exhibits hemolytic activity against red blood cells. Functionally, exhibits antimicrobial activity against E.coli and B.megaterium (in vitro). The protein is Cathelicidin antimicrobial peptide of Nomascus concolor (Black crested gibbon).